We begin with the raw amino-acid sequence, 510 residues long: MIWHVQNENFILDSTRIFMKAFHLLLFNGSFIFPECILIFGLILLLMIDLTSDQKDTPWLYFISSTSLVMSITALLFRWREEPMISFSGNFQTNNFNEIFQFLILLCSTLCIPLSVEYIECTEMAITEFLLFVLTATLGGMFLCGANDLITIFVAPECFSLCSYLLSGYTKRDVRSNEATMKYLLMGGASSSILVYGFSWLYGSSGGEIELQEIVNGLINTQMYNSPGISIALISITVGIGFKLSPAPFHQWTPDVYEGSPTPVVAFLSVTSKVAASASATRIFDIPFYFSSNEWHLLLEILAILSMILGNLIAITQTSMKRMLAYSSIGQIGYVIIGIIVGDSNDGYASMITYMLFYIAMNLGTFACIVLFGLRTGTDNIRDYAGLYTKDPFLALSSALCLLSLGGIPPLAGFFGKLYLFWCGWQAGLYFLVSIGLLTSVVSIYYYLKIIKLLMTGRNKEITPHVRNYRRSPLRSNNSIELSMIVCVIASTIPGISMNPIIAIAQDTLF.

The next 13 membrane-spanning stretches (helical) occupy residues 31-51 (FIFP…IDLT), 57-77 (TPWL…ALLF), 99-119 (IFQF…VEYI), 124-144 (MAIT…MFLC), 149-169 (LITI…LSGY), 183-203 (YLLM…WLYG), 229-249 (ISIA…PAPF), 295-315 (WHLL…LIAI), 323-343 (MLAY…IVGD), 354-374 (YMLF…LFGL), 395-415 (ALSS…AGFF), 418-438 (LYLF…IGLL), and 484-504 (MIVC…IIAI).

It belongs to the complex I subunit 2 family. NDH is composed of at least 16 different subunits, 5 of which are encoded in the nucleus.

It localises to the plastid. The protein localises to the chloroplast thylakoid membrane. It catalyses the reaction a plastoquinone + NADH + (n+1) H(+)(in) = a plastoquinol + NAD(+) + n H(+)(out). The catalysed reaction is a plastoquinone + NADPH + (n+1) H(+)(in) = a plastoquinol + NADP(+) + n H(+)(out). NDH shuttles electrons from NAD(P)H:plastoquinone, via FMN and iron-sulfur (Fe-S) centers, to quinones in the photosynthetic chain and possibly in a chloroplast respiratory chain. The immediate electron acceptor for the enzyme in this species is believed to be plastoquinone. Couples the redox reaction to proton translocation, and thus conserves the redox energy in a proton gradient. The chain is NAD(P)H-quinone oxidoreductase subunit 2 A, chloroplastic from Nymphaea alba (White water-lily).